Here is a 475-residue protein sequence, read N- to C-terminus: Protein transport protein Sec61 subunit alpha (475 aa).

10 helical membrane-spanning segments follow: residues 33 to 53 (LWTA…LFGI), 76 to 96 (LMEL…LLAG), 118 to 138 (LFGM…GMYG), 145 to 165 (AGIC…VLLL), 173 to 193 (YGLG…TIVW), 241 to 261 (NLMN…FQGF), 289 to 309 (IPII…QMLA), 354 to 374 (FLDP…CAFF), 420 to 440 (AAFG…IGAI), and 441 to 461 (GSGT…EIFV).

This sequence belongs to the SecY/SEC61-alpha family. The SEC61 channel-forming translocon complex consists of channel-forming core components SEC61A1, SEC61B and SEC61G and different auxiliary components such as SEC62 and SEC63. The SEC61 channel associates with the multi-pass translocon (MPT) complex. In terms of tissue distribution, expressed predominantly in epidermal cells of the embryo.

Its subcellular location is the endoplasmic reticulum membrane. Component of SEC61 channel-forming translocon complex that mediates transport of signal peptide-containing precursor polypeptides across the endoplasmic reticulum (ER). Forms a ribosome receptor and a gated pore in the ER membrane, both functions required for cotranslational translocation of nascent polypeptides. May cooperate with auxiliary protein SEC62, SEC63 and HSPA5/BiP to enable post-translational transport of small presecretory proteins. The SEC61 channel is also involved in ER membrane insertion of transmembrane proteins: it mediates membrane insertion of the first few transmembrane segments of proteins, while insertion of subsequent transmembrane regions of multi-pass membrane proteins is mediated by the multi-pass translocon (MPT) complex. This chain is Protein transport protein Sec61 subunit alpha, found in Halocynthia roretzi (Sea squirt).